The chain runs to 372 residues: GPN-loop GTPase 1 (372 aa).

A2 carries the post-translational modification N-acetylalanine. 29–34 (GSGKTT) lines the GTP pocket. Residues 86-88 (GPN) carry the Gly-Pro-Asn (GPN)-loop; involved in dimer interface motif. 189 to 192 (NKTD) lines the GTP pocket. S301 and S314 each carry phosphoserine. The disordered stretch occupies residues 303–372 (ALDPEAGKGN…ESMAHWKRNK (70 aa)). T328 carries the post-translational modification Phosphothreonine. Positions 330-342 (DEEDEEADSDTDD) are enriched in acidic residues. S338 bears the Phosphoserine mark. T340 is subject to Phosphothreonine. Positions 343–355 (IDHRVTEESREEP) are enriched in basic and acidic residues.

It belongs to the GPN-loop GTPase family. As to quaternary structure, heterodimer with GPN3. Binds to RNA polymerase II (RNAPII). Interacts directly with RNAPII subunits RPB4 and RPB7 and the CTD of RPB1. Interacts with XPA.

The protein resides in the cytoplasm. Its subcellular location is the nucleus. Small GTPase required for proper nuclear import of RNA polymerase II (RNAPII). May act at an RNAP assembly step prior to nuclear import. Forms an interface between the RNA polymerase II enzyme and chaperone/scaffolding proteins, suggesting that it is required to connect RNA polymerase II to regulators of protein complex formation. May be involved in nuclear localization of XPA. This chain is GPN-loop GTPase 1, found in Mus musculus (Mouse).